The primary structure comprises 116 residues: Phosphoribosyl-AMP cyclohydrolase (116 aa).

Position 85 (aspartate 85) interacts with Mg(2+). A Zn(2+)-binding site is contributed by cysteine 86. Mg(2+) contacts are provided by aspartate 87 and aspartate 89. The Zn(2+) site is built by cysteine 102 and cysteine 109.

It belongs to the PRA-CH family. As to quaternary structure, homodimer. Mg(2+) serves as cofactor. Requires Zn(2+) as cofactor.

The protein resides in the cytoplasm. It catalyses the reaction 1-(5-phospho-beta-D-ribosyl)-5'-AMP + H2O = 1-(5-phospho-beta-D-ribosyl)-5-[(5-phospho-beta-D-ribosylamino)methylideneamino]imidazole-4-carboxamide. The protein operates within amino-acid biosynthesis; L-histidine biosynthesis; L-histidine from 5-phospho-alpha-D-ribose 1-diphosphate: step 3/9. Functionally, catalyzes the hydrolysis of the adenine ring of phosphoribosyl-AMP. The protein is Phosphoribosyl-AMP cyclohydrolase of Thermobifida fusca (strain YX).